A 168-amino-acid chain; its full sequence is NADH-quinone oxidoreductase subunit E 2 (168 aa).

Cysteine 77, cysteine 82, cysteine 118, and cysteine 122 together coordinate [2Fe-2S] cluster.

The protein belongs to the complex I 24 kDa subunit family. [2Fe-2S] cluster serves as cofactor.

It carries out the reaction a quinone + NADH + 5 H(+)(in) = a quinol + NAD(+) + 4 H(+)(out). NDH-1 shuttles electrons from NADH, via FMN and iron-sulfur (Fe-S) centers, to quinones in the respiratory chain. The immediate electron acceptor for the enzyme in this species is believed to be ubiquinone. Couples the redox reaction to proton translocation (for every two electrons transferred, four hydrogen ions are translocated across the cytoplasmic membrane), and thus conserves the redox energy in a proton gradient. This is NADH-quinone oxidoreductase subunit E 2 (nuoE2) from Rhizobium meliloti (strain 1021) (Ensifer meliloti).